Here is a 141-residue protein sequence, read N- to C-terminus: Nucleoside diphosphate kinase (141 aa).

ATP is bound by residues Lys-11, Phe-59, Arg-87, Thr-93, Arg-104, and Asn-114. His-117 serves as the catalytic Pros-phosphohistidine intermediate.

Belongs to the NDK family. As to quaternary structure, homotetramer. It depends on Mg(2+) as a cofactor.

Its subcellular location is the cytoplasm. The enzyme catalyses a 2'-deoxyribonucleoside 5'-diphosphate + ATP = a 2'-deoxyribonucleoside 5'-triphosphate + ADP. It catalyses the reaction a ribonucleoside 5'-diphosphate + ATP = a ribonucleoside 5'-triphosphate + ADP. Its function is as follows. Major role in the synthesis of nucleoside triphosphates other than ATP. The ATP gamma phosphate is transferred to the NDP beta phosphate via a ping-pong mechanism, using a phosphorylated active-site intermediate. This chain is Nucleoside diphosphate kinase, found in Chromobacterium violaceum (strain ATCC 12472 / DSM 30191 / JCM 1249 / CCUG 213 / NBRC 12614 / NCIMB 9131 / NCTC 9757 / MK).